A 184-amino-acid polypeptide reads, in one-letter code: Thymidine kinase (184 aa).

Residues 9–16 (AAMNSGKS) and 82–85 (DEAQ) contribute to the ATP site. Glu83 (proton acceptor) is an active-site residue. Residues Cys140, Cys142, Cys177, and Cys180 each contribute to the Zn(2+) site.

The protein belongs to the thymidine kinase family. Homotetramer.

Its subcellular location is the cytoplasm. The enzyme catalyses thymidine + ATP = dTMP + ADP + H(+). The sequence is that of Thymidine kinase from Chromobacterium violaceum (strain ATCC 12472 / DSM 30191 / JCM 1249 / CCUG 213 / NBRC 12614 / NCIMB 9131 / NCTC 9757 / MK).